The sequence spans 298 residues: Homoserine kinase (298 aa).

83 to 93 (PISRGLGSSSS) contacts ATP.

It belongs to the GHMP kinase family. Homoserine kinase subfamily.

Its subcellular location is the cytoplasm. It catalyses the reaction L-homoserine + ATP = O-phospho-L-homoserine + ADP + H(+). It participates in amino-acid biosynthesis; L-threonine biosynthesis; L-threonine from L-aspartate: step 4/5. Its function is as follows. Catalyzes the ATP-dependent phosphorylation of L-homoserine to L-homoserine phosphate. This Clostridium botulinum (strain Alaska E43 / Type E3) protein is Homoserine kinase.